A 150-amino-acid polypeptide reads, in one-letter code: Interferon antagonist OPG027 (150 aa).

Belongs to the orthopoxvirus OPG027 family.

Functionally, inhibits antiviral activity induced by type I interferons. Does not block signal transduction of IFN, but is important to counteract the host antiviral state induced by a pre-treatment with IFN. This Cynomys gunnisoni (Gunnison's prairie dog) protein is Interferon antagonist OPG027 (OPG027).